We begin with the raw amino-acid sequence, 302 residues long: Elongation factor Ts (302 aa).

The segment at 82 to 85 (TDFV) is involved in Mg(2+) ion dislocation from EF-Tu.

The protein belongs to the EF-Ts family.

It localises to the cytoplasm. Its function is as follows. Associates with the EF-Tu.GDP complex and induces the exchange of GDP to GTP. It remains bound to the aminoacyl-tRNA.EF-Tu.GTP complex up to the GTP hydrolysis stage on the ribosome. The polypeptide is Elongation factor Ts (Nitrosospira multiformis (strain ATCC 25196 / NCIMB 11849 / C 71)).